The primary structure comprises 308 residues: GMP synthase [glutamine-hydrolyzing] subunit B (308 aa).

In terms of domain architecture, GMPS ATP-PPase spans Met1 to Arg185. Ser28–Ser34 provides a ligand contact to ATP.

Heterodimer composed of a glutamine amidotransferase subunit (A) and a GMP-binding subunit (B).

It carries out the reaction XMP + L-glutamine + ATP + H2O = GMP + L-glutamate + AMP + diphosphate + 2 H(+). The protein operates within purine metabolism; GMP biosynthesis; GMP from XMP (L-Gln route): step 1/1. In terms of biological role, catalyzes the synthesis of GMP from XMP. The protein is GMP synthase [glutamine-hydrolyzing] subunit B (guaAB) of Pyrococcus horikoshii (strain ATCC 700860 / DSM 12428 / JCM 9974 / NBRC 100139 / OT-3).